The chain runs to 468 residues: GTPase Der (468 aa).

2 EngA-type G domains span residues proline 3–aspartate 169 and isoleucine 199–threonine 372. GTP contacts are provided by residues glycine 9 to serine 16, aspartate 56 to phenylalanine 60, asparagine 119 to glutamate 122, glycine 205 to serine 212, aspartate 252 to leucine 256, and asparagine 317 to aspartate 320. One can recognise a KH-like domain in the interval cysteine 373 to histidine 457.

The protein belongs to the TRAFAC class TrmE-Era-EngA-EngB-Septin-like GTPase superfamily. EngA (Der) GTPase family. Associates with the 50S ribosomal subunit.

Functionally, GTPase that plays an essential role in the late steps of ribosome biogenesis. The chain is GTPase Der from Verminephrobacter eiseniae (strain EF01-2).